A 301-amino-acid chain; its full sequence is MKIAILSTKQELSSTQRLKEAALARGHKVKIINTLRCYMSLSQEKPTIHYMGKELARYDAVIPRIGASITFYGTAVVRQFEMMGTFCLNSSMSITRSRDKFRSLQFLSRKGIDLPITGFAHSPDDIEDLIQMVGGTPLIIKLIEGTQGIGVVLAETKKAAESVIQAFLGLKVNILIQEFIGETQGRDIRCFVIGNKVVATMQREARPGDFRSNVHRGGTTKLIKITPQEREISINAAKALGLNVAGVDLLRSKRGPLVLEVNSSPGLEGIENITKKDIAGMIIEFIEKNAKPIKAYSRYQG.

An ATP-grasp domain is found at 104–287; it reads LQFLSRKGID…IAGMIIEFIE (184 aa). ATP-binding positions include lysine 141, 178–179, aspartate 187, and 211–213; these read EF and RSN. The Mg(2+) site is built by aspartate 248, glutamate 260, and asparagine 262. Aspartate 248, glutamate 260, and asparagine 262 together coordinate Mn(2+).

Belongs to the RimK family. The cofactor is Mg(2+). Requires Mn(2+) as cofactor.

The sequence is that of Probable alpha-L-glutamate ligase from Coxiella burnetii (strain CbuK_Q154) (Coxiella burnetii (strain Q154)).